A 724-amino-acid polypeptide reads, in one-letter code: Threonine--tRNA ligase 2, cytoplasmic (724 aa).

Ala2 is modified (N-acetylalanine). The stretch at 44–72 (QAEGPCLTREVAQLRAENRELRHCLYRLR) forms a coiled coil. The disordered stretch occupies residues 90–112 (RAEAGRAAAGAQPPPSQSLEEDV). The 66-residue stretch at 155-220 (DSSNVITVRV…EGDATVELLT (66 aa)) folds into the TGS domain. Ser451 is subject to Phosphoserine.

This sequence belongs to the class-II aminoacyl-tRNA synthetase family. In terms of assembly, may be a component of the multisynthetase complex (MSC), a large multi-subunit complex which contains at least eight different aminoacyl-tRNA synthetases plus three auxillary subunits AIMP1, AIMP2 and EEF1E1. Interacts with the MSC components EPRS1, AIMP1, AIMP2 and KARS1.

The protein resides in the cytoplasm. Its subcellular location is the nucleus. It catalyses the reaction tRNA(Thr) + L-threonine + ATP = L-threonyl-tRNA(Thr) + AMP + diphosphate + H(+). Its function is as follows. Catalyzes the attachment of threonine to tRNA(Thr) in a two-step reaction: threonine is first activated by ATP to form Thr-AMP and then transferred to the acceptor end of tRNA(Thr). Also edits incorrectly charged tRNA(Thr) via its editing domain, at the post-transfer stage. This chain is Threonine--tRNA ligase 2, cytoplasmic (TARS3), found in Bos taurus (Bovine).